A 421-amino-acid chain; its full sequence is 3-hydroxy-3-methylglutaryl-coenzyme A reductase (421 aa).

Residues glutamate 109, lysine 240, and aspartate 315 each act as charge relay system in the active site. Catalysis depends on histidine 410, which acts as the Proton donor.

This sequence belongs to the HMG-CoA reductase family.

It carries out the reaction (R)-mevalonate + 2 NADP(+) + CoA = (3S)-3-hydroxy-3-methylglutaryl-CoA + 2 NADPH + 2 H(+). It participates in metabolic intermediate biosynthesis; (R)-mevalonate biosynthesis; (R)-mevalonate from acetyl-CoA: step 3/3. Converts HMG-CoA to mevalonate. The sequence is that of 3-hydroxy-3-methylglutaryl-coenzyme A reductase (hmgA) from Aeropyrum pernix (strain ATCC 700893 / DSM 11879 / JCM 9820 / NBRC 100138 / K1).